The primary structure comprises 572 residues: Proline--tRNA ligase (572 aa).

This sequence belongs to the class-II aminoacyl-tRNA synthetase family. ProS type 1 subfamily. In terms of assembly, homodimer.

Its subcellular location is the cytoplasm. It carries out the reaction tRNA(Pro) + L-proline + ATP = L-prolyl-tRNA(Pro) + AMP + diphosphate. Catalyzes the attachment of proline to tRNA(Pro) in a two-step reaction: proline is first activated by ATP to form Pro-AMP and then transferred to the acceptor end of tRNA(Pro). As ProRS can inadvertently accommodate and process non-cognate amino acids such as alanine and cysteine, to avoid such errors it has two additional distinct editing activities against alanine. One activity is designated as 'pretransfer' editing and involves the tRNA(Pro)-independent hydrolysis of activated Ala-AMP. The other activity is designated 'posttransfer' editing and involves deacylation of mischarged Ala-tRNA(Pro). The misacylated Cys-tRNA(Pro) is not edited by ProRS. This is Proline--tRNA ligase from Caldicellulosiruptor saccharolyticus (strain ATCC 43494 / DSM 8903 / Tp8T 6331).